Reading from the N-terminus, the 513-residue chain is Probable G-protein coupled receptor 176 (513 aa).

The segment at 1-25 (MGHNGSWVSPNTSHPRNTSGAQAGA) is disordered. The Extracellular segment spans residues 1 to 41 (MGHNGSWVSPNTSHPRNTSGAQAGANSSAFGELSEAQLYRQ). 4 N-linked (GlcNAc...) asparagine glycosylation sites follow: asparagine 4, asparagine 11, asparagine 17, and asparagine 26. The chain crosses the membrane as a helical span at residues 42–64 (FTTTVQVVIFIGSLLGNFTVLWS). Residues 65–77 (TCRTTVFKSVTNR) are Cytoplasmic-facing. The helical transmembrane segment at 78–98 (FIKNLACSGICASVVCVPFDI) threads the bilayer. Topologically, residues 99–108 (ILSTSPHCCW) are extracellular. The helical transmembrane segment at 109-129 (WIYTMLFCKVLKFLHKVFCSV) threads the bilayer. At 130–157 (TVLSFPAIALDRYYSVLYPLERKISDAK) the chain is on the cytoplasmic side. The helical transmembrane segment at 158–177 (SRELVMYIWAHAVVASVPVF) threads the bilayer. The Extracellular segment spans residues 178-204 (AVTNVADIYATSTCTEVWSNSLGHLVY). The helical transmembrane segment at 205 to 225 (VLIYNVTTVIVPVAVVFLFLI) threads the bilayer. The Cytoplasmic segment spans residues 226–264 (LIRRALSASQKKKVIIAALRTPQNTISIPYASQREAELH). A helical membrane pass occupies residues 265–285 (ATLLSMVTVFILCSVPYATLV). The Extracellular segment spans residues 286-301 (VYQTVLNVPNTSVFLL). A helical membrane pass occupies residues 302–322 (LTAIWLPKVSLLANPVLFLTV). At 323 to 513 (NRSVRKCLVG…KVSIFPKVDS (191 aa)) the chain is on the cytoplasmic side. Positions 404 to 432 (VLTSSPEGEESQLAPSVPPPGTVDSVSRV) are disordered.

Belongs to the G-protein coupled receptor 1 family. In terms of tissue distribution, expressed in brain, lung, heart, stomach, intestine, cultured aortic smooth muscle cells and cardiac myocytes.

It localises to the cell membrane. Its function is as follows. Orphan receptor involved in normal circadian rhythm behavior. Acts through the G-protein subclass G(z)-alpha and has an agonist-independent basal activity to repress cAMP production. The chain is Probable G-protein coupled receptor 176 (Gpr176) from Rattus norvegicus (Rat).